The chain runs to 147 residues: Large ribosomal subunit protein uL22 (147 aa).

A disordered region spans residues 110–147 (EEKKTVAKKAPAAKKTTTTKAPAKKTTSTKKATAKKES). Low complexity predominate over residues 117 to 140 (KKAPAAKKTTTTKAPAKKTTSTKK).

This sequence belongs to the universal ribosomal protein uL22 family. Part of the 50S ribosomal subunit.

Functionally, this protein binds specifically to 23S rRNA; its binding is stimulated by other ribosomal proteins, e.g. L4, L17, and L20. It is important during the early stages of 50S assembly. It makes multiple contacts with different domains of the 23S rRNA in the assembled 50S subunit and ribosome. The globular domain of the protein is located near the polypeptide exit tunnel on the outside of the subunit, while an extended beta-hairpin is found that lines the wall of the exit tunnel in the center of the 70S ribosome. The sequence is that of Large ribosomal subunit protein uL22 from Campylobacter jejuni subsp. jejuni serotype O:6 (strain 81116 / NCTC 11828).